Reading from the N-terminus, the 803-residue chain is Translation initiation factor IF-2 (803 aa).

Residues Pro-65–Thr-75 are compositionally biased toward basic and acidic residues. Residues Pro-65–Lys-186 are disordered. Residues Asn-175 to Leu-185 show a composition bias toward basic residues. Positions Ile-300–Glu-468 constitute a tr-type G domain. The segment at Gly-309–Thr-316 is G1. Residue Gly-309–Thr-316 participates in GTP binding. The G2 stretch occupies residues Gly-334–His-338. Residues Asp-355–Gly-358 form a G3 region. GTP contacts are provided by residues Asp-355 to His-359 and Asn-409 to Asp-412. Residues Asn-409–Asp-412 are G4. Residues Ser-445–Lys-447 form a G5 region.

The protein belongs to the TRAFAC class translation factor GTPase superfamily. Classic translation factor GTPase family. IF-2 subfamily.

The protein localises to the cytoplasm. One of the essential components for the initiation of protein synthesis. Protects formylmethionyl-tRNA from spontaneous hydrolysis and promotes its binding to the 30S ribosomal subunits. Also involved in the hydrolysis of GTP during the formation of the 70S ribosomal complex. The polypeptide is Translation initiation factor IF-2 (Tropheryma whipplei (strain Twist) (Whipple's bacillus)).